A 404-amino-acid chain; its full sequence is Rhomboid-related protein 3 (404 aa).

EF-hand domains are found at residues A34 to K69 and L70 to N105. A run of 7 helical transmembrane segments spans residues W164–L184, I218–G238, I250–M270, V274–M294, F303–L325, P338–L358, and W371–F391. Residue S278 is the Nucleophile of the active site. The active site involves H343.

This sequence belongs to the peptidase S54 family.

It is found in the membrane. The catalysed reaction is Cleaves type-1 transmembrane domains using a catalytic dyad composed of serine and histidine that are contributed by different transmembrane domains.. Functionally, may be involved in regulated intramembrane proteolysis and the subsequent release of functional polypeptides from their membrane anchors. This Homo sapiens (Human) protein is Rhomboid-related protein 3 (RHBDL3).